The chain runs to 286 residues: Small ribosomal subunit protein uS2 (286 aa).

The interval 257 to 286 (KDNKSNKSNTINADENIKESDLIGGSNNEG) is disordered.

The protein belongs to the universal ribosomal protein uS2 family.

This Ehrlichia ruminantium (strain Gardel) protein is Small ribosomal subunit protein uS2.